A 144-amino-acid polypeptide reads, in one-letter code: D-aminoacyl-tRNA deacylase (144 aa).

Positions 136–137 (GP) match the Gly-cisPro motif, important for rejection of L-amino acids motif.

The protein belongs to the DTD family. Homodimer.

The protein resides in the cytoplasm. It catalyses the reaction glycyl-tRNA(Ala) + H2O = tRNA(Ala) + glycine + H(+). It carries out the reaction a D-aminoacyl-tRNA + H2O = a tRNA + a D-alpha-amino acid + H(+). An aminoacyl-tRNA editing enzyme that deacylates mischarged D-aminoacyl-tRNAs. Also deacylates mischarged glycyl-tRNA(Ala), protecting cells against glycine mischarging by AlaRS. Acts via tRNA-based rather than protein-based catalysis; rejects L-amino acids rather than detecting D-amino acids in the active site. By recycling D-aminoacyl-tRNA to D-amino acids and free tRNA molecules, this enzyme counteracts the toxicity associated with the formation of D-aminoacyl-tRNA entities in vivo and helps enforce protein L-homochirality. This is D-aminoacyl-tRNA deacylase from Actinobacillus pleuropneumoniae serotype 5b (strain L20).